The chain runs to 341 residues: Protein CbhE (341 aa).

Residues 287–297 are compositionally biased toward acidic residues; it reads IDEENTSDSSE. Residues 287–341 are disordered; the sequence is IDEENTSDSSEEGTSKNRFRDTLFSNVPDSSSDSENEQEREKKELAGKTPSFRLC. Positions 323–332 are enriched in basic and acidic residues; it reads EQEREKKELA.

It is found in the cytoplasm. In terms of biological role, may be involved in the pathogenesis of acute Q fever. In Coxiella burnetii (strain RSA 493 / Nine Mile phase I), this protein is Protein CbhE (cbhE).